The primary structure comprises 195 residues: Imidazoleglycerol-phosphate dehydratase (195 aa).

The protein belongs to the imidazoleglycerol-phosphate dehydratase family.

It localises to the cytoplasm. It carries out the reaction D-erythro-1-(imidazol-4-yl)glycerol 3-phosphate = 3-(imidazol-4-yl)-2-oxopropyl phosphate + H2O. The protein operates within amino-acid biosynthesis; L-histidine biosynthesis; L-histidine from 5-phospho-alpha-D-ribose 1-diphosphate: step 6/9. The polypeptide is Imidazoleglycerol-phosphate dehydratase (Trichlorobacter lovleyi (strain ATCC BAA-1151 / DSM 17278 / SZ) (Geobacter lovleyi)).